Reading from the N-terminus, the 339-residue chain is Heat-inducible transcription repressor HrcA (339 aa).

Belongs to the HrcA family.

Its function is as follows. Negative regulator of class I heat shock genes (grpE-dnaK-dnaJ and groELS operons). Prevents heat-shock induction of these operons. This chain is Heat-inducible transcription repressor HrcA, found in Thiobacillus denitrificans (strain ATCC 25259 / T1).